The following is a 338-amino-acid chain: Taste receptor type 2 member 39 (338 aa).

The Extracellular segment spans residues 1 to 30 (MLGRCFPPDTKEKQQLRMTKLCDPAESELS). The helical transmembrane segment at 31-51 (PFLITLILAVLLAEYLIGIIA) threads the bilayer. Residues 52 to 74 (NGFIMAIHAAEWVQNKAVSTSGR) are Cytoplasmic-facing. The helical transmembrane segment at 75–95 (ILVFLSVSRIALQSLMMLEIT) threads the bilayer. At 96–116 (ISSTSLSFYSEDAVYYAFKIS) the chain is on the extracellular side. A helical membrane pass occupies residues 117 to 137 (FIFLNFCSLWFAAWLSFFYFV). Residues 138 to 156 (KIANFSYPLFLKLRWRITG) are Cytoplasmic-facing. The helical transmembrane segment at 157 to 177 (LIPWLLWLSVFISFSHSMFCI) threads the bilayer. Topologically, residues 178-205 (NICTVYCNNSFPIHSSNSTKKTYLSEIN) are extracellular. Residues Asn-185 and Asn-194 are each glycosylated (N-linked (GlcNAc...) asparagine). Residues 206 to 226 (VVGLAFFFNLGIVTPLIMFIL) traverse the membrane as a helical segment. The Cytoplasmic portion of the chain corresponds to 227–262 (TATLLILSLKRHTLHMGSNATGSNDPSMEAHMGAIK). The chain crosses the membrane as a helical span at residues 263 to 283 (AISYFLILYIFNAVALFIYLS). At 284-291 (NMFDINSL) the chain is on the extracellular side. Residues 292-312 (WNNLCQIIMAAYPAGHSILPI) traverse the membrane as a helical segment. Over 313–338 (QDNPGLRRAWKRLQLRLHLYPKEWTL) the chain is Cytoplasmic.

This sequence belongs to the G-protein coupled receptor T2R family.

The protein localises to the membrane. In terms of biological role, receptor that may play a role in the perception of bitterness and is gustducin-linked. May play a role in sensing the chemical composition of the gastrointestinal content. The activity of this receptor may stimulate alpha gustducin, mediate PLC-beta-2 activation and lead to the gating of TRPM5. This chain is Taste receptor type 2 member 39 (TAS2R39), found in Pan paniscus (Pygmy chimpanzee).